Reading from the N-terminus, the 415-residue chain is Diaminopimelate decarboxylase (415 aa).

An N6-(pyridoxal phosphate)lysine modification is found at Lys-60. Pyridoxal 5'-phosphate-binding positions include Gly-239 and 273–276 (EPGR). Substrate-binding residues include Arg-276, Arg-312, and Tyr-316. Cys-342 serves as the catalytic Proton donor. Residues Glu-343 and Tyr-370 each coordinate substrate. A pyridoxal 5'-phosphate-binding site is contributed by Tyr-370.

It belongs to the Orn/Lys/Arg decarboxylase class-II family. LysA subfamily. As to quaternary structure, homodimer. The cofactor is pyridoxal 5'-phosphate.

The catalysed reaction is meso-2,6-diaminopimelate + H(+) = L-lysine + CO2. Its pathway is amino-acid biosynthesis; L-lysine biosynthesis via DAP pathway; L-lysine from DL-2,6-diaminopimelate: step 1/1. Specifically catalyzes the decarboxylation of meso-diaminopimelate (meso-DAP) to L-lysine. The polypeptide is Diaminopimelate decarboxylase (Pseudomonas aeruginosa (strain ATCC 15692 / DSM 22644 / CIP 104116 / JCM 14847 / LMG 12228 / 1C / PRS 101 / PAO1)).